The sequence spans 368 residues: 3-dehydroquinate synthase (368 aa).

NAD(+)-binding positions include 110–114 (GVIGD), 134–135 (TS), lysine 147, and lysine 156. Zn(2+) contacts are provided by glutamate 189, histidine 254, and histidine 271.

It belongs to the sugar phosphate cyclases superfamily. Dehydroquinate synthase family. Requires NAD(+) as cofactor. The cofactor is Co(2+). It depends on Zn(2+) as a cofactor.

The protein resides in the cytoplasm. It carries out the reaction 7-phospho-2-dehydro-3-deoxy-D-arabino-heptonate = 3-dehydroquinate + phosphate. It functions in the pathway metabolic intermediate biosynthesis; chorismate biosynthesis; chorismate from D-erythrose 4-phosphate and phosphoenolpyruvate: step 2/7. Catalyzes the conversion of 3-deoxy-D-arabino-heptulosonate 7-phosphate (DAHP) to dehydroquinate (DHQ). The polypeptide is 3-dehydroquinate synthase (Thermosynechococcus vestitus (strain NIES-2133 / IAM M-273 / BP-1)).